We begin with the raw amino-acid sequence, 487 residues long: UDP-glycosyltransferase 85A7 (487 aa).

UDP-alpha-D-glucose contacts are provided by residues 364–366 (CPQ), 381–389 (HCGWNSTLE), and 403–406 (FSEQ).

Belongs to the UDP-glycosyltransferase family. As to expression, expressed in roots, shoots, leaves and flowers.

This is UDP-glycosyltransferase 85A7 (UGT85A7) from Arabidopsis thaliana (Mouse-ear cress).